The chain runs to 92 residues: Parbolysin P7 (92 aa).

3 disulfides stabilise this stretch: Cys-15/Cys-36, Cys-21/Cys-32, and Cys-46/Cys-59.

This sequence belongs to the worm cytolysin family. In terms of tissue distribution, localized within the skin and proboscis and are most readily isolated from body mucus secretions.

It is found in the secreted. In terms of biological role, cytolysin that shows hemolytic activity (on bovine erythrocytes, HC(50)=5.75 mg/ml). This hemolytic activity is completely inhibited by small unilamelar vesicles composed of PC/PG, PC/PI and PC/PS in 1:1 molar ratios (with at least 100 mg/ml concentration). This chain is Parbolysin P7, found in Parborlasia corrugatus (Antarctic nemertean worm).